Here is a 259-residue protein sequence, read N- to C-terminus: Trans-aconitate 2-methyltransferase (259 aa).

It belongs to the methyltransferase superfamily. Tam family.

The protein resides in the cytoplasm. The enzyme catalyses trans-aconitate + S-adenosyl-L-methionine = (E)-3-(methoxycarbonyl)pent-2-enedioate + S-adenosyl-L-homocysteine. Its function is as follows. Catalyzes the S-adenosylmethionine monomethyl esterification of trans-aconitate. The chain is Trans-aconitate 2-methyltransferase from Variovorax paradoxus (strain S110).